We begin with the raw amino-acid sequence, 1348 residues long: Putative late blight resistance protein homolog R1B-12 (1348 aa).

Coiled-coil stretches lie at residues arginine 446–glutamine 469 and proline 561–asparagine 583. The 297-residue stretch at arginine 552–glutamate 848 folds into the NB-ARC domain. Glycine 595–threonine 602 provides a ligand contact to ATP. LRR repeat units follow at residues phenylalanine 977 to leucine 1001, leucine 1051 to leucine 1074, proline 1123 to glutamine 1147, tyrosine 1151 to histidine 1170, leucine 1171 to asparagine 1194, phenylalanine 1197 to alanine 1219, phenylalanine 1220 to isoleucine 1244, and leucine 1309 to alanine 1332. The HMA domain occupies valine 1284 to leucine 1348.

This sequence belongs to the disease resistance NB-LRR family.

Its subcellular location is the cytoplasm. It is found in the membrane. In terms of biological role, confers resistance to late blight (Phytophthora infestans) races carrying the avirulence gene Avr1. Resistance proteins guard the plant against pathogens that contain an appropriate avirulence protein via an indirect interaction with this avirulence protein. That triggers a defense system including the hypersensitive response, which restricts the pathogen growth. The protein is Putative late blight resistance protein homolog R1B-12 (R1B-12) of Solanum demissum (Wild potato).